Here is a 215-residue protein sequence, read N- to C-terminus: Pyrophosphatase PpaX (215 aa).

Catalysis depends on aspartate 9, which acts as the Nucleophile.

Belongs to the HAD-like hydrolase superfamily. PpaX family. The cofactor is Mg(2+).

The enzyme catalyses diphosphate + H2O = 2 phosphate + H(+). Functionally, hydrolyzes pyrophosphate formed during P-Ser-HPr dephosphorylation by HPrK/P. Might play a role in controlling the intracellular pyrophosphate pool. The chain is Pyrophosphatase PpaX from Anoxybacillus flavithermus (strain DSM 21510 / WK1).